We begin with the raw amino-acid sequence, 87 residues long: Small ribosomal subunit protein bS20 (87 aa).

Residues 1–11 (MANHKSALKRI) are compositionally biased toward basic residues. Residues 1–23 (MANHKSALKRIKQTEKRTERNRH) are disordered.

This sequence belongs to the bacterial ribosomal protein bS20 family.

Binds directly to 16S ribosomal RNA. The polypeptide is Small ribosomal subunit protein bS20 (Geotalea uraniireducens (strain Rf4) (Geobacter uraniireducens)).